The following is a 504-amino-acid chain: AMP phosphorylase (504 aa).

AMP-binding positions include Gly169, 195–200 (SRAITS), and Thr204. Asp257 functions as the Proton donor in the catalytic mechanism. AMP is bound by residues Ser265 and Lys289.

The protein belongs to the thymidine/pyrimidine-nucleoside phosphorylase family. Type 2 subfamily.

It catalyses the reaction AMP + phosphate = alpha-D-ribose 1,5-bisphosphate + adenine. It carries out the reaction CMP + phosphate = cytosine + alpha-D-ribose 1,5-bisphosphate. The catalysed reaction is UMP + phosphate = alpha-D-ribose 1,5-bisphosphate + uracil. In terms of biological role, catalyzes the conversion of AMP and phosphate to adenine and ribose 1,5-bisphosphate (R15P). Exhibits phosphorylase activity toward CMP and UMP in addition to AMP. Functions in an archaeal AMP degradation pathway, together with R15P isomerase and RubisCO. This Methanococcus aeolicus (strain ATCC BAA-1280 / DSM 17508 / OCM 812 / Nankai-3) protein is AMP phosphorylase.